We begin with the raw amino-acid sequence, 248 residues long: Uracil-DNA glycosylase (248 aa).

Aspartate 85 (proton acceptor) is an active-site residue.

This sequence belongs to the uracil-DNA glycosylase (UDG) superfamily. UNG family.

Its subcellular location is the cytoplasm. It carries out the reaction Hydrolyzes single-stranded DNA or mismatched double-stranded DNA and polynucleotides, releasing free uracil.. In terms of biological role, excises uracil residues from the DNA which can arise as a result of misincorporation of dUMP residues by DNA polymerase or due to deamination of cytosine. The chain is Uracil-DNA glycosylase from Deinococcus deserti (strain DSM 17065 / CIP 109153 / LMG 22923 / VCD115).